Consider the following 300-residue polypeptide: Inosose dehydratase (300 aa).

This sequence belongs to the IolE/MocC family. Glutathione is required as a cofactor. Co(2+) serves as cofactor. The cofactor is Mn(2+).

It catalyses the reaction scyllo-inosose = 3D-3,5/4-trihydroxycyclohexane-1,2-dione + H2O. The protein operates within polyol metabolism; myo-inositol degradation into acetyl-CoA; acetyl-CoA from myo-inositol: step 2/7. In terms of biological role, catalyzes the dehydration of inosose (2-keto-myo-inositol, 2KMI or 2,4,6/3,5-pentahydroxycyclohexanone) to 3D-(3,5/4)-trihydroxycyclohexane-1,2-dione (D-2,3-diketo-4-deoxy-epi-inositol). The sequence is that of Inosose dehydratase from Lactiplantibacillus plantarum (strain ATCC BAA-793 / NCIMB 8826 / WCFS1) (Lactobacillus plantarum).